The following is a 276-amino-acid chain: Light-independent protochlorophyllide reductase iron-sulfur ATP-binding protein (276 aa).

ATP-binding positions include 12-17 (GIGKST) and Lys-41. Mg(2+) is bound at residue Ser-16. Positions 97 and 131 each coordinate [4Fe-4S] cluster. Residue 182–183 (NR) coordinates ATP.

The protein belongs to the NifH/BchL/ChlL family. Homodimer. Protochlorophyllide reductase is composed of three subunits; BchL, BchN and BchB. Requires [4Fe-4S] cluster as cofactor.

The enzyme catalyses chlorophyllide a + oxidized 2[4Fe-4S]-[ferredoxin] + 2 ADP + 2 phosphate = protochlorophyllide a + reduced 2[4Fe-4S]-[ferredoxin] + 2 ATP + 2 H2O. Its pathway is porphyrin-containing compound metabolism; bacteriochlorophyll biosynthesis (light-independent). Functionally, component of the dark-operative protochlorophyllide reductase (DPOR) that uses Mg-ATP and reduced ferredoxin to reduce ring D of protochlorophyllide (Pchlide) to form chlorophyllide a (Chlide). This reaction is light-independent. The L component serves as a unique electron donor to the NB-component of the complex, and binds Mg-ATP. In Chlorobium chlorochromatii (strain CaD3), this protein is Light-independent protochlorophyllide reductase iron-sulfur ATP-binding protein.